A 342-amino-acid chain; its full sequence is Dihydroorotase (342 aa).

Zn(2+) is bound by residues histidine 13 and histidine 15. Residues 15–17 (HLR) and asparagine 41 each bind substrate. Zn(2+)-binding residues include lysine 98, histidine 135, and histidine 173. Residue lysine 98 is modified to N6-carboxylysine. Histidine 135 is a binding site for substrate. Leucine 218 contributes to the substrate binding site. Aspartate 246 provides a ligand contact to Zn(2+). Residue aspartate 246 is part of the active site. Residues histidine 250 and alanine 262 each coordinate substrate.

It belongs to the metallo-dependent hydrolases superfamily. DHOase family. Class II DHOase subfamily. As to quaternary structure, homodimer. Requires Zn(2+) as cofactor.

The enzyme catalyses (S)-dihydroorotate + H2O = N-carbamoyl-L-aspartate + H(+). Its pathway is pyrimidine metabolism; UMP biosynthesis via de novo pathway; (S)-dihydroorotate from bicarbonate: step 3/3. Catalyzes the reversible cyclization of carbamoyl aspartate to dihydroorotate. This Aliivibrio fischeri (strain MJ11) (Vibrio fischeri) protein is Dihydroorotase.